Consider the following 115-residue polypeptide: MPTDHEEPCGPSHKSFCLNGGLCYVIPTIPSPFCRCVENYTGARCEEVFLPGSSIQTKSNLFEAFVALAVLVTLIIGAFYFLCRKGHFQRASSVQYDINLVETSSTSAHHSHEQH.

At 1–62 the chain is on the extracellular side; it reads MPTDHEEPCG…SSIQTKSNLF (62 aa). The 42-residue stretch at 5 to 46 folds into the EGF-like domain; sequence HEEPCGPSHKSFCLNGGLCYVIPTIPSPFCRCVENYTGARCE. 3 cysteine pairs are disulfide-bonded: cysteine 9/cysteine 23, cysteine 17/cysteine 34, and cysteine 36/cysteine 45. The N-linked (GlcNAc...) asparagine glycan is linked to asparagine 39. A helical transmembrane segment spans residues 63-83; the sequence is EAFVALAVLVTLIIGAFYFLC. Over 84-115 the chain is Cytoplasmic; that stretch reads RKGHFQRASSVQYDINLVETSSTSAHHSHEQH.

Belongs to the neuregulin family. Interacts with ERBB4. In terms of processing, proteolytic cleavage close to the plasma membrane on the external face leads to the release of the soluble growth factor form. Post-translationally, extensive glycosylation precedes the proteolytic cleavage.

Its subcellular location is the cell membrane. It localises to the secreted. In terms of biological role, low affinity ligand for the ERBB4 tyrosine kinase receptor. Concomitantly recruits ERBB1 and ERBB2 coreceptors, resulting in ligand-stimulated tyrosine phosphorylation and activation of the ERBB receptors. Does not bind to the ERBB1, ERBB2 and ERBB3 receptors. The chain is Pro-neuregulin-4, membrane-bound isoform (NRG4) from Homo sapiens (Human).